Consider the following 661-residue polypeptide: Pseudouridylate synthase 7 homolog (661 aa).

An N-acetylmethionine modification is found at methionine 1. The segment at 1-97 (MEMTEMTGVS…GLSEECEEEE (97 aa)) is disordered. Serine 10 carries the phosphoserine modification. Over residues 36-52 (SECSLTKGQDGLQNDFL) the composition is skewed to polar residues. Over residues 77–97 (QLEDEEEEEEDGLSEECEEEE) the composition is skewed to acidic residues. Position 127 is a phosphoserine (serine 127). Aspartate 294 acts as the Nucleophile in catalysis. One can recognise a TRUD domain in the interval 370-580 (GFINYYGMQR…SGAYRKIIIR (211 aa)). Threonine 610 carries the post-translational modification Phosphothreonine.

The protein belongs to the pseudouridine synthase TruD family. As to quaternary structure, interacts with SIRT1.

The protein localises to the nucleus. It carries out the reaction a uridine in tRNA = a pseudouridine in tRNA. The enzyme catalyses uridine(13) in tRNA = pseudouridine(13) in tRNA. It catalyses the reaction a uridine in mRNA = a pseudouridine in mRNA. Pseudouridylate synthase that catalyzes pseudouridylation of RNAs. Acts as a regulator of protein synthesis in embryonic stem cells by mediating pseudouridylation of RNA fragments derived from tRNAs (tRFs): pseudouridylated tRFs inhibit translation by targeting the translation initiation complex. Also catalyzes pseudouridylation of mRNAs: mediates pseudouridylation of mRNAs with the consensus sequence 5'-UGUAG-3'. Acts as a regulator of pre-mRNA splicing by mediating pseudouridylation of pre-mRNAs at locations associated with alternatively spliced regions. Pseudouridylation of pre-mRNAs near splice sites directly regulates mRNA splicing and mRNA 3'-end processing. In addition to mRNAs and tRNAs, binds other types of RNAs, such as snRNAs, Y RNAs and vault RNAs, suggesting that it can catalyze pseudouridylation of many RNA types. The protein is Pseudouridylate synthase 7 homolog of Homo sapiens (Human).